A 470-amino-acid polypeptide reads, in one-letter code: Putative multidrug resistance protein MdtD (470 aa).

Residues 1–11 are Periplasmic-facing; the sequence is MTELPDNTRWQ. The chain crosses the membrane as a helical span at residues 12 to 32; the sequence is LWIVALGFFMQSLDTTIVNTA. The Cytoplasmic segment spans residues 33–48; it reads LPSMAKSLGESPLHMH. A helical transmembrane segment spans residues 49-69; it reads MVVVSYVLTVAVMLPASGWLA. At 70 to 76 the chain is on the periplasmic side; that stretch reads DKIGVRN. A helical transmembrane segment spans residues 77 to 97; it reads IFFAAIVLFTLGSLFCALSGT. Topologically, residues 98-101 are cytoplasmic; that stretch reads LNQL. Residues 102 to 124 form a helical membrane-spanning segment; the sequence is VLARVLQGVGGAMMVPVGRLTVM. The Periplasmic portion of the chain corresponds to 125–137; it reads KIVPRAQYMAAMT. A helical membrane pass occupies residues 138–158; sequence FVTLPGQIGPLLGPALGGVLV. Residues 159-164 are Cytoplasmic-facing; the sequence is EYASWH. A helical membrane pass occupies residues 165 to 185; sequence WIFLINIPVGIVGAMATFMLM. The Periplasmic portion of the chain corresponds to 186-196; sequence PNYTIETRRFD. The chain crosses the membrane as a helical span at residues 197–217; it reads LPGFLLLAIGMAVLTLALDGS. Over 218 to 221 the chain is Cytoplasmic; that stretch reads KSMG. The chain crosses the membrane as a helical span at residues 222–242; that stretch reads ISPWTLAGLAAGGAAAILLYL. Residues 243 to 262 are Periplasmic-facing; it reads LHAKKNSGALFSLRLFRTPT. The chain crosses the membrane as a helical span at residues 263–283; that stretch reads FSLGLLGSFAGRIGSGMLPFM. Residues 284–285 are Cytoplasmic-facing; that stretch reads TP. Residues 286 to 306 traverse the membrane as a helical segment; that stretch reads VFLQIGLGFSPFHAGLMMIPM. The Periplasmic segment spans residues 307-341; sequence VLGSMGMKRIVVQIVNRFGYRRVLVATTLGLALVS. Residues 342 to 362 traverse the membrane as a helical segment; the sequence is LLFMSVALLGWYYLLPLVLLL. The Cytoplasmic portion of the chain corresponds to 363-395; it reads QGMVNSARFSSMNTLTLKDLPDTLASSGNSLLS. The chain crosses the membrane as a helical span at residues 396-416; that stretch reads MIMQLSMSIGVTIAGMLLGMF. Residues 417–430 are Periplasmic-facing; it reads GQQHIGIDSSATHH. Residues 431-451 form a helical membrane-spanning segment; it reads VFMYTWLCMAVIIALPAIIFA. Over 452 to 470 the chain is Cytoplasmic; sequence RVPNDTQQNMVISRRKRSL.

It belongs to the major facilitator superfamily. TCR/Tet family.

It is found in the cell inner membrane. In Salmonella heidelberg (strain SL476), this protein is Putative multidrug resistance protein MdtD.